Here is a 307-residue protein sequence, read N- to C-terminus: Follistatin-related protein 1 (307 aa).

Residues 1-19 form the signal peptide; sequence MMWRRWLALALVAVAWVHA. A Follistatin-like domain is found at 29–52; it reads ICANVFCGAGRECAVTEKGEPTCL. 5 disulfide bridges follow: cysteine 30–cysteine 41, cysteine 35–cysteine 51, cysteine 53–cysteine 83, cysteine 57–cysteine 76, and cysteine 65–cysteine 97. A Kazal-like domain is found at 47–99; it reads GEPTCLCIEQCKPHKRPVCGSNGKTYLNHCELHRDACLTGSKIQVDYDGHCKE. Asparagine 143 carries N-linked (GlcNAc...) asparagine glycosylation. One can recognise an EF-hand 1 domain in the interval 143-177; sequence NYSEILDKYFKNFDNGDSRLDSSEFLKFVEQNETA. Phosphoserine is present on serine 164. Residues asparagine 174 and asparagine 179 are each glycosylated (N-linked (GlcNAc...) asparagine). The 36-residue stretch at 192-227 folds into the EF-hand 2 domain; the sequence is LRGLCVDALIELSDENADWKLSFQEFLKCLNPSFNP. The VWFC domain maps to 232 to 286; the sequence is CALEDETYADGAETEVDCNRCVCACGNWVCTAMTCDGKNQKGAQTQAEEEMTRYV.

In terms of assembly, homodimer. Interacts with SCN10A. Interacts with DIP2A; DIP2A may act as a cell surface receptor for FSTL1. Interacts with BMP4. Interacts with CD14; this interaction promotes TL4-mediated signaling cascade.

The protein resides in the secreted. Secreted glycoprotein that is involved in various physiological processes, such as angiogenesis, regulation of the immune response, cell proliferation and differentiation. Plays a role in the development of the central nervous system, skeletal system, lungs, and ureter. Promotes endothelial cell survival, migration and differentiation into network structures in an AKT-dependent manner. Also promotes survival of cardiac myocytes. Initiates various signaling cascades by activating different receptors on the cell surface such as DIP2A, TLR4 or BMP receptors. The chain is Follistatin-related protein 1 (FSTL1) from Bos taurus (Bovine).